The following is a 147-amino-acid chain: Ribonuclease H (147 aa).

The region spanning 3-145 (TEDRVEIYTD…ADQLANKGVE (143 aa)) is the RNase H type-1 domain. Residues Asp12, Glu50, Asp72, and Asp137 each contribute to the Mg(2+) site.

Belongs to the RNase H family. Monomer. The cofactor is Mg(2+).

Its subcellular location is the cytoplasm. It carries out the reaction Endonucleolytic cleavage to 5'-phosphomonoester.. Its function is as follows. Endonuclease that specifically degrades the RNA of RNA-DNA hybrids. The polypeptide is Ribonuclease H (Chromobacterium violaceum (strain ATCC 12472 / DSM 30191 / JCM 1249 / CCUG 213 / NBRC 12614 / NCIMB 9131 / NCTC 9757 / MK)).